Consider the following 212-residue polypeptide: Ropporin-1 (212 aa).

In terms of domain architecture, RIIa spans 12-43 (PELPELLKQFTKDAIRTQPPDLIQWAAEYFGA). The residue at position 56 (Ser-56) is a Phosphoserine. Residues 209–212 (VRLE) are interaction with RHPN1.

Belongs to the ropporin family. As to quaternary structure, homodimer. Interacts with AKAP3. May interact with SPA17. Interacts with RHPN1. Interacts with FSCB; the interaction increases upon spermatozoa capacitation conditions. Interacts with CFAP61. Sumoylated, sumoylation decreases upon spermatozoa capacitation conditions. In terms of tissue distribution, testis-specific. Present in the most inner parts of seminiferous tubules (at protein level).

The protein resides in the cell projection. It is found in the cilium. It localises to the flagellum. Its function is as follows. Important for male fertility. With ROPN1L, involved in fibrous sheath integrity and sperm motility, plays a role in PKA-dependent signaling processes required for spermatozoa capacitation. This is Ropporin-1 (Ropn1) from Mus musculus (Mouse).